The primary structure comprises 2195 residues: Integrator complex subunit 1 (2195 aa).

The interval 1 to 86 is disordered; that stretch reads MNRAKPTTVR…RPKLSSTPPL (86 aa). S13 carries the phosphoserine modification. A compositionally biased stretch (polar residues) spans 34–45; sequence GQASESKTTSTL. K47 is subject to N6-acetyllysine. Residues 62–75 are compositionally biased toward low complexity; it reads SASLSGTSALTGLT. The residue at position 83 (T83) is a Phosphothreonine. Position 87 is a phosphoserine (S87). The segment at 267-297 is disordered; that stretch reads LLQGEGARSGGELGAGSSPHPSLTEEEDSQT. S307 and S926 each carry phosphoserine. Residues 923–947 are disordered; sequence STASGEEDDEGESREQKAKKRQRQQ. A helical transmembrane segment spans residues 1165–1185; it reads HILVVHAMVILLTLGPPRSGD. The tract at residues 1313–1347 is disordered; sequence SLPPRRDSTEAPKPESSPEPPPGQGRTRAGTQVPV. Residues 1316–1325 are compositionally biased toward basic and acidic residues; that stretch reads PRRDSTEAPK. Residues S1320, S1328, and S1329 each carry the phosphoserine modification.

This sequence belongs to the Integrator subunit 1 family. As to quaternary structure, component of the Integrator complex, composed of core subunits INTS1, INTS2, INTS3, INTS4, INTS5, INTS6, INTS7, INTS8, INTS9/RC74, INTS10, INTS11/CPSF3L, INTS12, INTS13, INTS14 and INTS15. The core complex associates with protein phosphatase 2A subunits PPP2CA and PPP2R1A, to form the Integrator-PP2A (INTAC) complex. Interacts with ESRRB, ESRRB is not a core component of the Integrator complex and this association is a bridge for the interaction with the multiprotein complex Integrator; attracts the transcriptional machinery.

Its subcellular location is the nucleus. It localises to the nucleus membrane. Functionally, component of the integrator complex, a multiprotein complex that terminates RNA polymerase II (Pol II) transcription in the promoter-proximal region of genes. The integrator complex provides a quality checkpoint during transcription elongation by driving premature transcription termination of transcripts that are unfavorably configured for transcriptional elongation: the complex terminates transcription by (1) catalyzing dephosphorylation of the C-terminal domain (CTD) of Pol II subunit POLR2A/RPB1 and SUPT5H/SPT5, (2) degrading the exiting nascent RNA transcript via endonuclease activity and (3) promoting the release of Pol II from bound DNA. The integrator complex is also involved in terminating the synthesis of non-coding Pol II transcripts, such as enhancer RNAs (eRNAs), small nuclear RNAs (snRNAs), telomerase RNAs and long non-coding RNAs (lncRNAs). Within the integrator complex, INTS1 is involved in the post-termination step: INTS1 displaces INTS3 and the SOSS factors, allowing the integrator complex to return to the closed conformation, ready to bind to the paused elongation complex for another termination cycle. Mediates recruitment of cytoplasmic dynein to the nuclear envelope, probably as component of the integrator complex. The sequence is that of Integrator complex subunit 1 from Mus musculus (Mouse).